We begin with the raw amino-acid sequence, 125 residues long: Secretion system apparatus protein SsaO (125 aa).

This Salmonella typhimurium (strain LT2 / SGSC1412 / ATCC 700720) protein is Secretion system apparatus protein SsaO (ssaO).